A 180-amino-acid chain; its full sequence is Inner membrane-spanning protein YciB (180 aa).

Transmembrane regions (helical) follow at residues 25–45, 49–69, 76–96, 118–138, and 150–170; these read QNAT…CYII, VSKL…ITLI, IKIK…MSGI, IILS…NEVV, and FKVF…LPLL.

It belongs to the YciB family.

It localises to the cell inner membrane. Functionally, plays a role in cell envelope biogenesis, maintenance of cell envelope integrity and membrane homeostasis. The chain is Inner membrane-spanning protein YciB from Rickettsia prowazekii (strain Madrid E).